The following is a 1208-amino-acid chain: Urease accessory protein 2 (1208 aa).

2 coiled-coil regions span residues 187-362 (RDKI…EKAA) and 400-469 (IKAL…MHEQ). The SMC hinge domain occupies 523–633 (DGVFGPLYDL…ICEDLQTAAH (111 aa)). Coiled coils occupy residues 688–771 (HIEV…YEEE) and 817–903 (NRLE…VQTQ). A disordered region spans residues 748 to 773 (ESSLEEAEGASRDAKAKRASYEEELR). Residues 756-773 (GASRDAKAKRASYEEELR) are compositionally biased toward basic and acidic residues.

Belongs to the SMC family. SMC3 subfamily. As to quaternary structure, component of cohesin complexes.

It is found in the nucleus. Central component of cohesin, a complex required for chromosome cohesion during the cell cycle. The cohesin complex may form a large proteinaceous ring within which sister chromatids can be trapped. At anaphase, the complex is cleaved and dissociates from chromatin, allowing sister chromatids to segregate. Cohesion is coupled to DNA replication and is involved in DNA repair. The cohesin complex also plays an important role in spindle pole assembly during mitosis and in chromosomes movement. Is unrelated to urease function in C.neoformans. The chain is Urease accessory protein 2 from Cryptococcus neoformans var. grubii serotype A (strain H99 / ATCC 208821 / CBS 10515 / FGSC 9487) (Filobasidiella neoformans var. grubii).